Consider the following 252-residue polypeptide: Glucosamine-6-phosphate deaminase (252 aa).

Asp-67 acts as the Proton acceptor; for enolization step in catalysis. Asn-137 functions as the For ring-opening step in the catalytic mechanism. His-139 functions as the Proton acceptor; for ring-opening step in the catalytic mechanism. Glu-144 acts as the For ring-opening step in catalysis.

Belongs to the glucosamine/galactosamine-6-phosphate isomerase family. NagB subfamily.

It carries out the reaction alpha-D-glucosamine 6-phosphate + H2O = beta-D-fructose 6-phosphate + NH4(+). The protein operates within amino-sugar metabolism; N-acetylneuraminate degradation; D-fructose 6-phosphate from N-acetylneuraminate: step 5/5. Catalyzes the reversible isomerization-deamination of glucosamine 6-phosphate (GlcN6P) to form fructose 6-phosphate (Fru6P) and ammonium ion. The chain is Glucosamine-6-phosphate deaminase from Staphylococcus aureus (strain MRSA252).